The primary structure comprises 924 residues: Probable dipeptidyl-aminopeptidase B (924 aa).

The interval Met-1–Arg-104 is disordered. Topologically, residues Met-1–Arg-111 are cytoplasmic. Basic and acidic residues predominate over residues Asp-9–Pro-23. Positions Ser-31–Ile-43 are enriched in polar residues. Basic and acidic residues-rich tracts occupy residues Arg-47–Thr-58 and Ser-92–Arg-104. A helical; Signal-anchor for type II membrane protein membrane pass occupies residues Trp-112 to Val-132. The Vacuolar segment spans residues Ser-133–Ala-924. N-linked (GlcNAc...) asparagine glycans are attached at residues Asn-231 and Asn-364. Ser-768 serves as the catalytic Charge relay system. Residue Asn-827 is glycosylated (N-linked (GlcNAc...) asparagine). Catalysis depends on charge relay system residues Asp-845 and His-878.

Belongs to the peptidase S9B family.

It localises to the vacuole membrane. The enzyme catalyses Release of an N-terminal dipeptide, Xaa-Yaa-|-Zaa-, from a polypeptide, preferentially when Yaa is Pro, provided Zaa is neither Pro nor hydroxyproline.. Type IV dipeptidyl-peptidase which removes N-terminal dipeptides sequentially from polypeptides having unsubstituted N-termini provided that the penultimate residue is proline. In Sordaria macrospora (strain ATCC MYA-333 / DSM 997 / K(L3346) / K-hell), this protein is Probable dipeptidyl-aminopeptidase B (DAPB).